A 429-amino-acid chain; its full sequence is Serine hydroxymethyltransferase (429 aa).

(6S)-5,6,7,8-tetrahydrofolate is bound by residues Leu133 and 137 to 139 (GHL). Lys243 is subject to N6-(pyridoxal phosphate)lysine. Glu259 is a (6S)-5,6,7,8-tetrahydrofolate binding site.

This sequence belongs to the SHMT family. In terms of assembly, homodimer. It depends on pyridoxal 5'-phosphate as a cofactor.

Its subcellular location is the cytoplasm. The catalysed reaction is (6R)-5,10-methylene-5,6,7,8-tetrahydrofolate + glycine + H2O = (6S)-5,6,7,8-tetrahydrofolate + L-serine. It functions in the pathway one-carbon metabolism; tetrahydrofolate interconversion. The protein operates within amino-acid biosynthesis; glycine biosynthesis; glycine from L-serine: step 1/1. In terms of biological role, catalyzes the reversible interconversion of serine and glycine with tetrahydrofolate (THF) serving as the one-carbon carrier. This reaction serves as the major source of one-carbon groups required for the biosynthesis of purines, thymidylate, methionine, and other important biomolecules. Also exhibits THF-independent aldolase activity toward beta-hydroxyamino acids, producing glycine and aldehydes, via a retro-aldol mechanism. The protein is Serine hydroxymethyltransferase of Aster yellows witches'-broom phytoplasma (strain AYWB).